Consider the following 183-residue polypeptide: Inner membrane-spanning protein YciB (183 aa).

The next 5 helical transmembrane spans lie at 22–42, 50–70, 72–92, 118–138, and 148–168; these read IYAA…ITYL, MHLA…FFHD, AFIK…LIAS, VTWY…YIAF, and FKVF…VVYL.

Belongs to the YciB family.

It localises to the cell inner membrane. Its function is as follows. Plays a role in cell envelope biogenesis, maintenance of cell envelope integrity and membrane homeostasis. The polypeptide is Inner membrane-spanning protein YciB (Shewanella frigidimarina (strain NCIMB 400)).